The chain runs to 23 residues: Protein male-specific 40 (23 aa).

During early embryogenesis expression is initially detected at the early cleavage stages in the nucleus of two discrete cells. Subsequently, expression is abundant in the cytoplasm of the newly formed pole cells. Male-specific expression during the third larval instar.

The protein resides in the cytoplasm. It is found in the nucleus. This chain is Protein male-specific 40, found in Drosophila melanogaster (Fruit fly).